A 244-amino-acid polypeptide reads, in one-letter code: Mediator of RNA polymerase II transcription subunit 8 (244 aa).

The stretch at 6–30 (QEQLKTLEQSRQRLVQLTRSLASLI) forms a coiled coil.

The protein belongs to the Mediator complex subunit 8 family. As to quaternary structure, component of the Mediator complex.

It localises to the nucleus. Functionally, component of the Mediator complex, a coactivator involved in the regulated transcription of nearly all RNA polymerase II-dependent genes. Mediator functions as a bridge to convey information from gene-specific regulatory proteins to the basal RNA polymerase II transcription machinery. Mediator is recruited to promoters by direct interactions with regulatory proteins and serves as a scaffold for the assembly of a functional preinitiation complex with RNA polymerase II and the general transcription factors. This chain is Mediator of RNA polymerase II transcription subunit 8 (med8), found in Aspergillus oryzae (strain ATCC 42149 / RIB 40) (Yellow koji mold).